The primary structure comprises 342 residues: Replication factor C subunit 3 (342 aa).

63–70 lines the ATP pocket; the sequence is GPPGTGKT.

This sequence belongs to the activator 1 small subunits family. Heteropentamer of subunits rfc1, rfc2, rfc3, rfc4 and rfc5 that forms a complex (RFC) with PCNA in the presence of ATP. Two other complexes exist where rfc1 can be replaced by either ctf18 or elg1 to form the ctf18-RFC or the elg1-RFC complexes respectively.

It is found in the nucleus. Functionally, the elongation of primed DNA templates by DNA polymerase delta and epsilon requires the action of the accessory proteins PCNA and activator 1. Subunit 3 binds ATP. Also involved in replication and DNA damage checkpoint controls, probably functioning as a checkpoint sensor. This is Replication factor C subunit 3 (rfc3) from Schizosaccharomyces pombe (strain 972 / ATCC 24843) (Fission yeast).